A 473-amino-acid chain; its full sequence is Photosystem II CP43 reaction center protein (473 aa).

Residues 1-14 constitute a propeptide that is removed on maturation; sequence MKTLYSLRRFYPVE. An N-acetylthreonine modification is found at Thr15. Residue Thr15 is modified to Phosphothreonine. 5 consecutive transmembrane segments (helical) span residues 69–93, 134–155, 178–200, 255–275, and 291–312; these read LFEVAHFVPEKPMYEQGLILLPHLA, LLGPETLEESFPFFGYVWKDRN, KALYFGGVYDTWAPGGGDVRKIT, KPFAWARRALVWSGEAYLSYS, and WFNNTAYPSEFYGPTGPEASQA. [CaMn4O5] cluster is bound at residue Glu367. Residues 426-473 constitute a propeptide that is removed on maturation; the sequence is LSTSHFVLGFFLFVGHLWHAGRARAAAAGFEKGIDRDFEPVLSMTPLN. Residues 447 to 471 traverse the membrane as a helical segment; the sequence is RARAAAAGFEKGIDRDFEPVLSMTP.

It belongs to the PsbB/PsbC family. PsbC subfamily. As to quaternary structure, PSII is composed of 1 copy each of membrane proteins PsbA, PsbB, PsbC, PsbD, PsbE, PsbF, PsbH, PsbI, PsbJ, PsbK, PsbL, PsbM, PsbT, PsbX, PsbY, PsbZ, Psb30/Ycf12, at least 3 peripheral proteins of the oxygen-evolving complex and a large number of cofactors. It forms dimeric complexes. Requires Binds multiple chlorophylls and provides some of the ligands for the Ca-4Mn-5O cluster of the oxygen-evolving complex. It may also provide a ligand for a Cl- that is required for oxygen evolution. PSII binds additional chlorophylls, carotenoids and specific lipids. as cofactor. Over time a tryptophan in the fifth lumenal loop is converted to 2-hydroxy-2,3-dihydrotryptophan, 2-oxo-2,3-dihydrotryptophan, and kynurenine by oxidizing species from the active site. This oxidation targets the protein for turnover.

It localises to the plastid. Its subcellular location is the chloroplast thylakoid membrane. One of the components of the core complex of photosystem II (PSII). It binds chlorophyll and helps catalyze the primary light-induced photochemical processes of PSII. PSII is a light-driven water:plastoquinone oxidoreductase, using light energy to abstract electrons from H(2)O, generating O(2) and a proton gradient subsequently used for ATP formation. The sequence is that of Photosystem II CP43 reaction center protein from Spinacia oleracea (Spinach).